A 738-amino-acid polypeptide reads, in one-letter code: Ethylene receptor (738 aa).

3 helical membrane-spanning segments follow: residues Ile22–Val42, Val53–Trp73, and Val91–Leu111. The Cu cation site is built by Cys64 and His68. In terms of domain architecture, GAF spans Asp157–Leu305. One can recognise a Histidine kinase domain in the interval Val348–Ile585. His351 is subject to Phosphohistidine; by autocatalysis. Positions Lys613–Leu730 constitute a Response regulatory domain. Asp661 is subject to 4-aspartylphosphate.

It belongs to the ethylene receptor family. In terms of assembly, homodimer; disulfide-linked. Requires Cu cation as cofactor. Post-translationally, activation probably requires a transfer of a phosphate group between a His in the transmitter domain and an Asp of the receiver domain.

It localises to the endoplasmic reticulum membrane. The catalysed reaction is ATP + protein L-histidine = ADP + protein N-phospho-L-histidine.. Functionally, may act early in the ethylene signal transduction pathway, possibly as an ethylene receptor, or as a regulator of the pathway. This chain is Ethylene receptor (ETR1), found in Nicotiana tabacum (Common tobacco).